Here is a 500-residue protein sequence, read N- to C-terminus: Glycerol kinase (500 aa).

Thr13 contributes to the ADP binding site. The ATP site is built by Thr13, Thr14, and Ser15. Sn-glycerol 3-phosphate is bound at residue Thr13. Arg17 is a binding site for ADP. Sn-glycerol 3-phosphate contacts are provided by Arg83, Glu84, and Tyr135. The glycerol site is built by Arg83, Glu84, and Tyr135. His231 carries the phosphohistidine; by HPr modification. Asp245 is a sn-glycerol 3-phosphate binding site. Residues Asp245 and Gln246 each coordinate glycerol. Positions 267 and 310 each coordinate ADP. ATP-binding residues include Thr267, Gly310, Gln314, and Gly411. ADP contacts are provided by Gly411 and Asn415.

It belongs to the FGGY kinase family. As to quaternary structure, homotetramer and homodimer (in equilibrium). In terms of processing, the phosphoenolpyruvate-dependent sugar phosphotransferase system (PTS), including enzyme I, and histidine-containing protein (HPr) are required for the phosphorylation, which leads to the activation of the enzyme.

It catalyses the reaction glycerol + ATP = sn-glycerol 3-phosphate + ADP + H(+). The protein operates within polyol metabolism; glycerol degradation via glycerol kinase pathway; sn-glycerol 3-phosphate from glycerol: step 1/1. Activated by phosphorylation and inhibited by fructose 1,6-bisphosphate (FBP). Its function is as follows. Key enzyme in the regulation of glycerol uptake and metabolism. Catalyzes the phosphorylation of glycerol to yield sn-glycerol 3-phosphate. The sequence is that of Glycerol kinase from Oceanobacillus iheyensis (strain DSM 14371 / CIP 107618 / JCM 11309 / KCTC 3954 / HTE831).